We begin with the raw amino-acid sequence, 84 residues long: Cell division topological specificity factor (84 aa).

The protein belongs to the MinE family.

Its function is as follows. Prevents the cell division inhibition by proteins MinC and MinD at internal division sites while permitting inhibition at polar sites. This ensures cell division at the proper site by restricting the formation of a division septum at the midpoint of the long axis of the cell. The polypeptide is Cell division topological specificity factor (Cupriavidus metallidurans (strain ATCC 43123 / DSM 2839 / NBRC 102507 / CH34) (Ralstonia metallidurans)).